Reading from the N-terminus, the 267-residue chain is Tryptophan synthase alpha chain (267 aa).

Active-site proton acceptor residues include glutamate 44 and aspartate 55.

The protein belongs to the TrpA family. In terms of assembly, tetramer of two alpha and two beta chains.

The enzyme catalyses (1S,2R)-1-C-(indol-3-yl)glycerol 3-phosphate + L-serine = D-glyceraldehyde 3-phosphate + L-tryptophan + H2O. It participates in amino-acid biosynthesis; L-tryptophan biosynthesis; L-tryptophan from chorismate: step 5/5. Its function is as follows. The alpha subunit is responsible for the aldol cleavage of indoleglycerol phosphate to indole and glyceraldehyde 3-phosphate. This is Tryptophan synthase alpha chain from Coxiella burnetii (strain Dugway 5J108-111).